The primary structure comprises 349 residues: DCD domain-containing protein NRP (349 aa).

The disordered stretch occupies residues 157–201 (NNNKNKGIDEDHQIQKGGKKNRKNQQNNNNQRNEDDKNNGLDKRF). Basic and acidic residues predominate over residues 188–201 (RNEDDKNNGLDKRF). Residues 214–346 (ETIGGYIFVC…VLSLLDIFAD (133 aa)) enclose the DCD domain.

In terms of assembly, interacts with CRY2 in the cytoplasm. Interacts with Verticillium dahliae PevD1. Interacts with FYPP3. As to expression, highly expressed in sensecent leaves, cauline leaves and sepals. Expressed in the shoot apical meristem, leaf veins, central cylinder, root hair zone, root tips, rosette leaves, flowers and siliques.

It is found in the cytoplasm. Its function is as follows. Contributes to the initial phase of responses to abiotic and biotic stress signals. Binds FYPP3 and facilitates FYPP3 degradation to promote abscisic acid (ABA) response. This is DCD domain-containing protein NRP from Arabidopsis thaliana (Mouse-ear cress).